Reading from the N-terminus, the 366-residue chain is 8-hydroxyquercetin 8-O-methyltransferase (366 aa).

Residues 207 to 210, 231 to 232, 251 to 252, and Lys265 each bind S-adenosyl-L-methionine; these read VGGG, DL, and DM. Residue His269 is the Proton acceptor of the active site.

The protein belongs to the class I-like SAM-binding methyltransferase superfamily. Cation-independent O-methyltransferase family. COMT subfamily. In terms of assembly, homodimer.

The enzyme catalyses 3,3',4',5,7,8-hexahydroxyflavone + S-adenosyl-L-methionine = 3,3',4',5,7-pentahydroxy-8-methoxyflavone + S-adenosyl-L-homocysteine + H(+). It catalyses the reaction 4',7,8-trihydroxyflavone + S-adenosyl-L-methionine = 4',7-dihydroxy-8-methoxyflavone + S-adenosyl-L-homocysteine + H(+). It carries out the reaction 8-hydroxy-7-methoxyflavone + S-adenosyl-L-methionine = 7,8-dimethoxyflavone + S-adenosyl-L-homocysteine + H(+). The protein operates within flavonoid metabolism. Its function is as follows. Flavonoid 8-O-methyltransferase involved in the biosynthesis of polymethoxylated flavonoids natural products such as pebrellin, aroma compounds which contribute to the flavor of peppermint, and exhibit pharmacological activities such as anti-allergic, anti-oxidant, antibacterial, anti-proliferative, and anti-inflammatory effects. Catalyzes S-adenosylmethionine-dependent regioselective 8-O-methylation of flavonoids; active on various hydroxylated flavonoid substrates, including 7,8,3'4'-tetrahydroxy-flavone, 7,8,4'-trihydroxy-flavone and 8-hydroxy-flavone 7-methyl ether. This chain is 8-hydroxyquercetin 8-O-methyltransferase, found in Mentha piperita (Peppermint).